The primary structure comprises 146 residues: Acidic phospholipase A2 S13-69J (146 aa).

The signal sequence occupies residues 1–19 (MYPAHLLVLLAVCVSLLGA). Positions 20-27 (ASIPPQPL) are excised as a propeptide. Cystine bridges form between Cys38/Cys98, Cys54/Cys145, Cys56/Cys72, Cys71/Cys126, Cys78/Cys119, Cys87/Cys112, and Cys105/Cys117. Ca(2+) contacts are provided by Tyr55, Gly57, and Gly59. His75 is an active-site residue. A Ca(2+)-binding site is contributed by Asp76. Asp120 is an active-site residue.

It belongs to the phospholipase A2 family. Group I subfamily. D49 sub-subfamily. Ca(2+) is required as a cofactor. Expressed by the venom gland.

The protein resides in the secreted. It catalyses the reaction a 1,2-diacyl-sn-glycero-3-phosphocholine + H2O = a 1-acyl-sn-glycero-3-phosphocholine + a fatty acid + H(+). Its function is as follows. Snake venom phospholipase A2 (PLA2) that inhibits collagen-induced platelet aggregation. PLA2 catalyzes the calcium-dependent hydrolysis of the 2-acyl groups in 3-sn-phosphoglycerides. This Austrelaps superbus (Lowland copperhead snake) protein is Acidic phospholipase A2 S13-69J.